The sequence spans 117 residues: Large ribosomal subunit protein bL20 (117 aa).

This sequence belongs to the bacterial ribosomal protein bL20 family.

Binds directly to 23S ribosomal RNA and is necessary for the in vitro assembly process of the 50S ribosomal subunit. It is not involved in the protein synthesizing functions of that subunit. This Rickettsia bellii (strain OSU 85-389) protein is Large ribosomal subunit protein bL20.